The sequence spans 92 residues: Small ribosomal subunit protein uS19 (92 aa).

Belongs to the universal ribosomal protein uS19 family.

In terms of biological role, protein S19 forms a complex with S13 that binds strongly to the 16S ribosomal RNA. In Cellvibrio japonicus (strain Ueda107) (Pseudomonas fluorescens subsp. cellulosa), this protein is Small ribosomal subunit protein uS19.